The chain runs to 207 residues: Large ribosomal subunit protein uL4 (207 aa).

The disordered stretch occupies residues 44–78 (MRQGTHKTKNRAEVSGGGRKPWRQKGTGRARQGSI).

This sequence belongs to the universal ribosomal protein uL4 family. Part of the 50S ribosomal subunit.

Functionally, one of the primary rRNA binding proteins, this protein initially binds near the 5'-end of the 23S rRNA. It is important during the early stages of 50S assembly. It makes multiple contacts with different domains of the 23S rRNA in the assembled 50S subunit and ribosome. This protein when expressed in E.coli represses the endogenous S10 operon; this may not occur in B.stearothermophilus however. Its function is as follows. Forms part of the polypeptide exit tunnel. This chain is Large ribosomal subunit protein uL4 (rplD), found in Geobacillus stearothermophilus (Bacillus stearothermophilus).